The sequence spans 375 residues: tRNA-specific 2-thiouridylase MnmA (375 aa).

Residues 7–14 (GLSGGVDS) and Met33 each bind ATP. The segment at 102 to 104 (NPD) is interaction with target base in tRNA. Cys107 (nucleophile) is an active-site residue. Cys107 and Cys205 are joined by a disulfide. Gly132 provides a ligand contact to ATP. Residues 155–157 (KDQ) form an interaction with tRNA region. The active-site Cysteine persulfide intermediate is the Cys205. The interaction with tRNA stretch occupies residues 313–314 (RY).

It belongs to the MnmA/TRMU family.

It localises to the cytoplasm. It carries out the reaction S-sulfanyl-L-cysteinyl-[protein] + uridine(34) in tRNA + AH2 + ATP = 2-thiouridine(34) in tRNA + L-cysteinyl-[protein] + A + AMP + diphosphate + H(+). Catalyzes the 2-thiolation of uridine at the wobble position (U34) of tRNA, leading to the formation of s(2)U34. This is tRNA-specific 2-thiouridylase MnmA from Phytoplasma australiense.